The sequence spans 696 residues: MARDFSLDRTRNIGIMAHIDAGKTTTTERILYYTGRIHKIGETHEGASQMDWMEQEQDRGITITSAATTAEWDNHRVNIIDTPGHVDFTVEVERSLRVLDGAVTVLDAQSGVEPQTETVWRQATTYGVPRIVFVNKMDKLGANFEYSVSTIHDRLQANAQPIQLPIGAEDEFEAIIDLVEMTCFKYTNDLGTEIEEIEIPEDHKERAEEARAALVEAVAETDDELMEKYLGDEEISIPELKAAIRKATTDVEFYPVLVGTAFKNKGVQLMLNAVIDYLPSPLDVKPIIGHRADNPDEEVIAKADDNAEFAALAFKVMTDPYVGKLTFFRVYSGTLSSGSYVKNSTKNKRERVGRLLQMHANSRQELNTVYSGDIAAAVGLKDTGTGDTLCGEKNDIILESMDFPEPVIHLSVEPKSKADQDKMTTALVKLQEEDPTFHAHTDDETGQVIIGGMGELHLDILVDRMKKEFNVECNVGAPMVSYRETFKSSAEVQGKFARQSGGRGQYGDVKIEFSPNETGGGFEFENAIVGGVVPREYIPSVEAGLKDSMENGVLAGYPLIDVKARLFDGSYHDVDSSEMAFKVAASLALKEAAKKCDPVILEPMMKVTIEMPEEYMGDIMGDVTSRRGRVDGMEPRGNAQVVNAYVPLSEMFGYATSLRSNTQGRGTYTMYFDHYAEVPKSIAEDIIKKNSGNKAE.

Residues 8–282 (DRTRNIGIMA…AVIDYLPSPL (275 aa)) form the tr-type G domain. GTP is bound by residues 17–24 (AHIDAGKT), 81–85 (DTPGH), and 135–138 (NKMD).

Belongs to the TRAFAC class translation factor GTPase superfamily. Classic translation factor GTPase family. EF-G/EF-2 subfamily.

The protein resides in the cytoplasm. Catalyzes the GTP-dependent ribosomal translocation step during translation elongation. During this step, the ribosome changes from the pre-translocational (PRE) to the post-translocational (POST) state as the newly formed A-site-bound peptidyl-tRNA and P-site-bound deacylated tRNA move to the P and E sites, respectively. Catalyzes the coordinated movement of the two tRNA molecules, the mRNA and conformational changes in the ribosome. This chain is Elongation factor G, found in Staphylococcus saprophyticus subsp. saprophyticus (strain ATCC 15305 / DSM 20229 / NCIMB 8711 / NCTC 7292 / S-41).